Consider the following 59-residue polypeptide: Cecropin-A (59 aa).

A signal peptide spans 1 to 23 (MNFTKLFLLIAMAVLLLTGQSEA). Positions 58-59 (GK) are cleaved as a propeptide — removed in mature form (AeaeCec2).

In terms of tissue distribution, hemolymph (at protein level).

It localises to the secreted. Its function is as follows. Antimicrobial peptide. Antibacterial activity against Gram-negative bacteria E.coli D22 and D31, E.carotovora, K.pneumoniae, P.aeruginosa, S.typhimurium, E.cloacae B12 and X.campestris and Gram-positive bacteria A.viridans, M.luteus, B.megaterium and S.pyogenes. Possesses antifungal activity against F.oxysporum, F.culmorum and N.crassa, C.albicans, C.neoformans and S.cerevisiae. No activity against Gram-negative S.marcescens Db11, Gram-positive B.cereus, B.subtilis, B.thuringiensis, S.aureus and L.monocytogenes, the fungi A.fumigatus and B.bassiana and C.glabrata. Partially neutralizes lipopolysaccharides (LPS). Exhibits anti-inflammatory properties: inhibits LPS-induced iNOS/NOS2 transcription, nitric oxide (NO) and pro-inflammatory cytokine production in mouse macrophages and human peripheral blood mononuclear cells (PBMCs); inhibits LPS-induced activation of MAPK and NF-kappa-B signaling pathways in mouse macrophages. The sequence is that of Cecropin-A (CECA) from Aedes aegypti (Yellowfever mosquito).